A 428-amino-acid chain; its full sequence is Forkhead box protein B2 (428 aa).

Residues 12–103 (QKPPYSYISL…GDMFENGSFL (92 aa)) constitute a DNA-binding region (fork-head). Disordered regions lie at residues 118–217 (HLHS…MQEA) and 408–428 (PTAA…LVHS). Basic residues predominate over residues 136–163 (LHPHHPHHAHHHHHHHHHAAHHHHHHHP). Composition is skewed to pro residues over residues 164–174 (PQPPPPPPPHM) and 183–192 (APAPQPPHLP). The segment covering 193 to 217 (SQPAQQPQPQSQPPQTSHPGKMQEA) has biased composition (low complexity).

The protein localises to the nucleus. Functionally, transcription factor. This is Forkhead box protein B2 (Foxb2) from Mus musculus (Mouse).